Consider the following 413-residue polypeptide: Serine hydroxymethyltransferase (413 aa).

Residues Leu115 and 119 to 121 (GHL) contribute to the (6S)-5,6,7,8-tetrahydrofolate site. Lys224 carries the N6-(pyridoxal phosphate)lysine modification.

The protein belongs to the SHMT family. In terms of assembly, homodimer. The cofactor is pyridoxal 5'-phosphate.

Its subcellular location is the cytoplasm. The enzyme catalyses (6R)-5,10-methylene-5,6,7,8-tetrahydrofolate + glycine + H2O = (6S)-5,6,7,8-tetrahydrofolate + L-serine. Its pathway is one-carbon metabolism; tetrahydrofolate interconversion. The protein operates within amino-acid biosynthesis; glycine biosynthesis; glycine from L-serine: step 1/1. Functionally, catalyzes the reversible interconversion of serine and glycine with tetrahydrofolate (THF) serving as the one-carbon carrier. This reaction serves as the major source of one-carbon groups required for the biosynthesis of purines, thymidylate, methionine, and other important biomolecules. Also exhibits THF-independent aldolase activity toward beta-hydroxyamino acids, producing glycine and aldehydes, via a retro-aldol mechanism. The sequence is that of Serine hydroxymethyltransferase from Mycoplasma capricolum subsp. capricolum (strain California kid / ATCC 27343 / NCTC 10154).